A 250-amino-acid chain; its full sequence is Ribosomal RNA small subunit methyltransferase J (250 aa).

S-adenosyl-L-methionine is bound by residues 101-102 (RD), 117-118 (ER), 153-154 (SS), and D171.

This sequence belongs to the methyltransferase superfamily. RsmJ family.

It localises to the cytoplasm. It carries out the reaction guanosine(1516) in 16S rRNA + S-adenosyl-L-methionine = N(2)-methylguanosine(1516) in 16S rRNA + S-adenosyl-L-homocysteine + H(+). In terms of biological role, specifically methylates the guanosine in position 1516 of 16S rRNA. This is Ribosomal RNA small subunit methyltransferase J from Escherichia coli (strain SMS-3-5 / SECEC).